We begin with the raw amino-acid sequence, 454 residues long: CCA-adding enzyme (454 aa).

Ser53 and Lys56 together coordinate ATP. CTP is bound by residues Ser53 and Lys56. Positions 65, 67, and 119 each coordinate Mg(2+). ATP is bound by residues His142, Lys161, and Tyr170. His142, Lys161, and Tyr170 together coordinate CTP.

This sequence belongs to the tRNA nucleotidyltransferase/poly(A) polymerase family. Archaeal CCA-adding enzyme subfamily. In terms of assembly, homodimer. Requires Mg(2+) as cofactor.

It carries out the reaction a tRNA precursor + 2 CTP + ATP = a tRNA with a 3' CCA end + 3 diphosphate. The enzyme catalyses a tRNA with a 3' CCA end + 2 CTP + ATP = a tRNA with a 3' CCACCA end + 3 diphosphate. Functionally, catalyzes the addition and repair of the essential 3'-terminal CCA sequence in tRNAs without using a nucleic acid template. Adds these three nucleotides in the order of C, C, and A to the tRNA nucleotide-73, using CTP and ATP as substrates and producing inorganic pyrophosphate. tRNA 3'-terminal CCA addition is required both for tRNA processing and repair. Also involved in tRNA surveillance by mediating tandem CCA addition to generate a CCACCA at the 3' terminus of unstable tRNAs. While stable tRNAs receive only 3'-terminal CCA, unstable tRNAs are marked with CCACCA and rapidly degraded. This Thermococcus gammatolerans (strain DSM 15229 / JCM 11827 / EJ3) protein is CCA-adding enzyme.